Here is a 131-residue protein sequence, read N- to C-terminus: Ponticulin-like protein M (131 aa).

Positions Met-1–Gly-19 are cleaved as a signal peptide. Ser-106 carries GPI-like-anchor amidated serine lipidation. The propeptide at Asn-107–Leu-131 is removed in mature form.

This sequence belongs to the ponticulin family. In terms of processing, the GPI-like-anchor contains a phosphoceramide group, rather than a phosphatidyl group.

Its subcellular location is the cell membrane. Its function is as follows. Binds F-actin and nucleates actin assembly. The sequence is that of Ponticulin-like protein M (ponM) from Dictyostelium discoideum (Social amoeba).